The sequence spans 130 residues: Ribosome-binding factor A (130 aa).

Belongs to the RbfA family. As to quaternary structure, monomer. Binds 30S ribosomal subunits, but not 50S ribosomal subunits or 70S ribosomes.

The protein localises to the cytoplasm. In terms of biological role, one of several proteins that assist in the late maturation steps of the functional core of the 30S ribosomal subunit. Associates with free 30S ribosomal subunits (but not with 30S subunits that are part of 70S ribosomes or polysomes). Required for efficient processing of 16S rRNA. May interact with the 5'-terminal helix region of 16S rRNA. This Prochlorococcus marinus (strain AS9601) protein is Ribosome-binding factor A.